A 435-amino-acid polypeptide reads, in one-letter code: Serine/threonine-protein kinase ssn3 (435 aa).

In terms of domain architecture, Protein kinase spans 49–377; it reads YRIVGFISSG…AREALEHPYF (329 aa). ATP is bound by residues 55 to 63 and Lys79; that span reads ISSGTYGRV. The Proton acceptor role is filled by Asp181. A compositionally biased stretch (basic and acidic residues) spans 398–407; that stretch reads RRVTQDDNDI. The interval 398-435 is disordered; sequence RRVTQDDNDIRSGSLPGTKRSGLPDDSLMGRASKRIKE.

The protein belongs to the protein kinase superfamily. CMGC Ser/Thr protein kinase family. CDC2/CDKX subfamily. Component of the srb8-11 complex, a regulatory module of the Mediator complex. The cofactor is Mg(2+).

The protein localises to the nucleus. It catalyses the reaction L-seryl-[protein] + ATP = O-phospho-L-seryl-[protein] + ADP + H(+). The catalysed reaction is L-threonyl-[protein] + ATP = O-phospho-L-threonyl-[protein] + ADP + H(+). The enzyme catalyses [DNA-directed RNA polymerase] + ATP = phospho-[DNA-directed RNA polymerase] + ADP + H(+). Its function is as follows. Component of the srb8-11 complex. The srb8-11 complex is a regulatory module of the Mediator complex which is itself involved in regulation of basal and activated RNA polymerase II-dependent transcription. The srb8-11 complex may be involved in the transcriptional repression of a subset of genes regulated by Mediator. It may inhibit the association of the Mediator complex with RNA polymerase II to form the holoenzyme complex. The srb8-11 complex phosphorylates the C-terminal domain (CTD) of the largest subunit of RNA polymerase II. In Aspergillus terreus (strain NIH 2624 / FGSC A1156), this protein is Serine/threonine-protein kinase ssn3 (ssn3).